A 152-amino-acid chain; its full sequence is Proteolipid protein 2 (152 aa).

Residues 19-137 (FSRTRKGFLL…DAYITFPLRQ (119 aa)) form the MARVEL domain. Transmembrane regions (helical) follow at residues 25–45 (GFLL…FSTS), 48–68 (GYSF…VVYM), and 85–105 (FFRT…VLVE). Asn108 carries an N-linked (GlcNAc...) asparagine glycan. The helical transmembrane segment at 112–132 (IAAGALGLCAAGLFGYDAYIT) threads the bilayer.

The protein localises to the membrane. Functionally, may play a role in cell differentiation in the intestinal epithelium. The sequence is that of Proteolipid protein 2 (PLP2) from Bos taurus (Bovine).